The chain runs to 217 residues: Lipid A acyltransferase PagP (217 aa).

A signal peptide spans 1 to 24 (MYLKRILITLSLITLPIVPCLSYA). Residues H89, D132, and S133 contribute to the active site.

This sequence belongs to the lipid A palmitoyltransferase family. Homodimer.

The protein resides in the cell outer membrane. It carries out the reaction a lipid A + a 1,2-diacyl-sn-glycero-3-phosphocholine = a hepta-acyl lipid A + a 2-acyl-sn-glycero-3-phosphocholine. The catalysed reaction is a lipid IVA + a 1,2-diacyl-sn-glycero-3-phosphocholine = a lipid IVB + a 2-acyl-sn-glycero-3-phosphocholine. The enzyme catalyses a lipid IIA + a 1,2-diacyl-sn-glycero-3-phosphocholine = a lipid IIB + a 2-acyl-sn-glycero-3-phosphocholine. Its function is as follows. Transfers a fatty acid residue from the sn-1 position of a phospholipid to the N-linked hydroxyfatty acid chain on the proximal unit of lipid A or its precursors. The polypeptide is Lipid A acyltransferase PagP (Pectobacterium atrosepticum (strain SCRI 1043 / ATCC BAA-672) (Erwinia carotovora subsp. atroseptica)).